We begin with the raw amino-acid sequence, 392 residues long: Copper-containing nitrite reductase (392 aa).

A signal peptide spans 1 to 18 (MKRQALAAMIASLFALAA). C19 carries N-palmitoyl cysteine lipidation. A lipid anchor (S-diacylglycerol cysteine) is attached at C19. A disordered region spans residues 30 to 49 (ETPAASAEAASSAAQATAET). Plastocyanin-like domains are found at residues 101-195 (WTFD…ILVE) and 245-346 (GHVG…LKVE). Residues H134, H139, H174, C175, H183, and M188 each contribute to the Cu cation site. Residue H139 participates in substrate binding. H280 contributes to the substrate binding site. H329 is a binding site for Cu cation. The tract at residues 367 to 392 (GAASAPAASAPAASAPAASASEKSVY) is disordered. Repeat copies occupy residues 368–372 (AASAP), 373–377 (AASAP), 378–382 (AASAP), and 383–387 (AASAS). Residues 368–387 (AASAPAASAPAASAPAASAS) are 4 X 5 AA tandem repeats of A-A-S-A-P.

Belongs to the multicopper oxidase family. Homotrimer. Cu(+) is required as a cofactor. The cofactor is Cu(2+). Post-translationally, palmitoylated.

Its subcellular location is the cell outer membrane. It carries out the reaction nitric oxide + Fe(III)-[cytochrome c] + H2O = Fe(II)-[cytochrome c] + nitrite + 2 H(+). Functionally, catalyzes the reduction of nitrite to nitric oxide (NO), probably with azurin as electron donor. Essential for growth and survival in oxygen-depleted environments. Can also provide protection against killing by normal human sera. This chain is Copper-containing nitrite reductase (aniA), found in Neisseria gonorrhoeae.